Consider the following 340-residue polypeptide: GTP 3',8-cyclase (340 aa).

The region spanning 20 to 246 (RFQRQYTYLR…PKAVNDGPAK (227 aa)) is the Radical SAM core domain. GTP is bound at residue Arg-29. Residues Cys-36 and Cys-40 each contribute to the [4Fe-4S] cluster site. Residue Tyr-42 participates in S-adenosyl-L-methionine binding. Position 43 (Cys-43) interacts with [4Fe-4S] cluster. Arg-79 lines the GTP pocket. S-adenosyl-L-methionine is bound at residue Gly-83. Thr-110 lines the GTP pocket. Ser-134 is an S-adenosyl-L-methionine binding site. Lys-171 lines the GTP pocket. Position 205 (Met-205) interacts with S-adenosyl-L-methionine. Cys-268 and Cys-271 together coordinate [4Fe-4S] cluster. 273–275 (RLR) lines the GTP pocket. Residue Cys-285 coordinates [4Fe-4S] cluster.

Belongs to the radical SAM superfamily. MoaA family. In terms of assembly, monomer and homodimer. [4Fe-4S] cluster is required as a cofactor.

The catalysed reaction is GTP + AH2 + S-adenosyl-L-methionine = (8S)-3',8-cyclo-7,8-dihydroguanosine 5'-triphosphate + 5'-deoxyadenosine + L-methionine + A + H(+). It participates in cofactor biosynthesis; molybdopterin biosynthesis. Its function is as follows. Catalyzes the cyclization of GTP to (8S)-3',8-cyclo-7,8-dihydroguanosine 5'-triphosphate. This is GTP 3',8-cyclase from Haemophilus ducreyi (strain 35000HP / ATCC 700724).